The primary structure comprises 145 residues: Ribonuclease H (145 aa).

Residues 1–142 (MDTPVYLYTD…ADDLANRGAA (142 aa)) enclose the RNase H type-1 domain. Mg(2+) contacts are provided by aspartate 10, glutamate 48, aspartate 70, and aspartate 134.

It belongs to the RNase H family. As to quaternary structure, monomer. Mg(2+) serves as cofactor.

The protein resides in the cytoplasm. The enzyme catalyses Endonucleolytic cleavage to 5'-phosphomonoester.. Functionally, endonuclease that specifically degrades the RNA of RNA-DNA hybrids. This chain is Ribonuclease H, found in Neisseria gonorrhoeae (strain ATCC 700825 / FA 1090).